Reading from the N-terminus, the 272-residue chain is 3-methyl-2-oxobutanoate hydroxymethyltransferase (272 aa).

Mg(2+)-binding residues include aspartate 51 and aspartate 90. Residues aspartate 51–serine 52, aspartate 90, and lysine 118 contribute to the 3-methyl-2-oxobutanoate site. A Mg(2+)-binding site is contributed by glutamate 120. Catalysis depends on glutamate 187, which acts as the Proton acceptor.

It belongs to the PanB family. As to quaternary structure, homodecamer; pentamer of dimers. Mg(2+) serves as cofactor.

It localises to the cytoplasm. The enzyme catalyses 3-methyl-2-oxobutanoate + (6R)-5,10-methylene-5,6,7,8-tetrahydrofolate + H2O = 2-dehydropantoate + (6S)-5,6,7,8-tetrahydrofolate. The protein operates within cofactor biosynthesis; (R)-pantothenate biosynthesis; (R)-pantoate from 3-methyl-2-oxobutanoate: step 1/2. In terms of biological role, catalyzes the reversible reaction in which hydroxymethyl group from 5,10-methylenetetrahydrofolate is transferred onto alpha-ketoisovalerate to form ketopantoate. The protein is 3-methyl-2-oxobutanoate hydroxymethyltransferase of Xylella fastidiosa (strain M23).